Consider the following 86-residue polypeptide: Defensin-like SRCA-homolog protein (86 aa).

Positions 1 to 26 are cleaved as a signal peptide; that stretch reads MRCVVLFMVSCLLIVLLINHFEEVEA. Cystine bridges form between C32–C84, C42–C70, C52–C79, and C68–C81.

It belongs to the DEFL family.

The protein localises to the secreted. Its function is as follows. Involved in male-mediated self-incompatibility. The sequence is that of Defensin-like SRCA-homolog protein (SCR37) from Arabidopsis lyrata (Lyre-leaved rock-cress).